The chain runs to 370 residues: Cytochrome b (370 aa).

A run of 4 helical transmembrane segments spans residues Phe25–Val45, Trp69–Ile90, Trp105–Leu125, and Phe170–Leu190. Heme b is bound by residues His75 and His89. 2 residues coordinate heme b: His174 and His188. His193 lines the a ubiquinone pocket. A run of 4 helical transmembrane segments spans residues Tyr218–Phe238, Leu280–His300, Leu312–Thr332, and Phe339–Pro358.

The protein belongs to the cytochrome b family. In terms of assembly, the cytochrome bc1 complex contains 3 respiratory subunits (MT-CYB, CYC1 and UQCRFS1), 2 core proteins (UQCRC1 and UQCRC2) and probably 6 low-molecular weight proteins. It depends on heme b as a cofactor.

The protein localises to the mitochondrion inner membrane. In terms of biological role, component of the ubiquinol-cytochrome c reductase complex (complex III or cytochrome b-c1 complex) that is part of the mitochondrial respiratory chain. The b-c1 complex mediates electron transfer from ubiquinol to cytochrome c. Contributes to the generation of a proton gradient across the mitochondrial membrane that is then used for ATP synthesis. The chain is Cytochrome b (MT-CYB) from Chilabothrus striatus (Haitian boa constrictor).